A 232-amino-acid chain; its full sequence is Ribosomal RNA small subunit methyltransferase G (232 aa).

S-adenosyl-L-methionine-binding positions include Gly-93, Leu-98, 144-145, and Arg-163; that span reads VE.

This sequence belongs to the methyltransferase superfamily. RNA methyltransferase RsmG family.

It localises to the cytoplasm. The catalysed reaction is guanosine(527) in 16S rRNA + S-adenosyl-L-methionine = N(7)-methylguanosine(527) in 16S rRNA + S-adenosyl-L-homocysteine. In terms of biological role, specifically methylates the N7 position of guanine in position 527 of 16S rRNA. This Burkholderia pseudomallei (strain 1106a) protein is Ribosomal RNA small subunit methyltransferase G.